Consider the following 92-residue polypeptide: Promotilin (92 aa).

The segment at 12-49 (RMQEKERNRGQKKSLGLQQRSEEVGSLDPTEAAEEEGK) is disordered.

The protein belongs to the motilin family.

The protein resides in the secreted. Functionally, plays an important role in the regulation of interdigestive gastrointestinal motility and indirectly causes rhythmic contraction of duodenal and colonic smooth muscle. The protein is Promotilin (MLN) of Equus caballus (Horse).